The chain runs to 297 residues: tRNA dimethylallyltransferase (297 aa).

10–17 (GITASGKS) provides a ligand contact to ATP. 12–17 (TASGKS) serves as a coordination point for substrate. Residues 36–39 (DSKQ) form an interaction with substrate tRNA region.

It belongs to the IPP transferase family. Monomer. Mg(2+) is required as a cofactor.

The catalysed reaction is adenosine(37) in tRNA + dimethylallyl diphosphate = N(6)-dimethylallyladenosine(37) in tRNA + diphosphate. Catalyzes the transfer of a dimethylallyl group onto the adenine at position 37 in tRNAs that read codons beginning with uridine, leading to the formation of N6-(dimethylallyl)adenosine (i(6)A). This chain is tRNA dimethylallyltransferase, found in Wolbachia sp. subsp. Brugia malayi (strain TRS).